The following is a 20-amino-acid chain: Pregnancy-associated glycoprotein 75 (20 aa).

Belongs to the peptidase A1 family. N-glycosylated. In terms of tissue distribution, expressed in chorionic epithelium (trophectoderm).

It localises to the secreted. This is Pregnancy-associated glycoprotein 75 from Bubalus bubalis (Domestic water buffalo).